A 313-amino-acid chain; its full sequence is E3 ubiquitin-protein ligase SGIP1 (313 aa).

One can recognise an F-box domain in the interval 16–65 (REYSKEIPIDLLIEIFSRLSTGDIARCRCVSKIWSSVPRLRDFTELFLKI).

Interacts with SGS3 in cytoplasmic granules.

The protein localises to the cytoplasmic granule. It catalyses the reaction S-ubiquitinyl-[E2 ubiquitin-conjugating enzyme]-L-cysteine + [acceptor protein]-L-lysine = [E2 ubiquitin-conjugating enzyme]-L-cysteine + N(6)-ubiquitinyl-[acceptor protein]-L-lysine.. It participates in protein degradation; proteasomal ubiquitin-dependent pathway. It functions in the pathway protein modification; protein ubiquitination. E3 ubiquitin-protein ligase which triggers the ubiquitination and subsequent degradation of SGS3 in response to heat. Involved in the mechanisms necessary for quick response to heat and subsequent heritable transgenerational memory of heat acclimation (global warming) such as early flowering and attenuated immunity; this process includes epigenetic regulation as well as post-transcriptional gene silencing (PTGS). In response to heat, HSFA2 is activated and promotes the expression of REF6 which in turn derepresses HSFA2, thus establishing an inheritable feedback loop able to trigger SGIP1 and subsequent SGIP1-mediated SGS3 degradation; this prevents the biosynthesis of trans-acting siRNA (tasiRNA) and leads to the release of HTT5, which drives early flowering but attenuates immunity. The protein is E3 ubiquitin-protein ligase SGIP1 of Arabidopsis thaliana (Mouse-ear cress).